Consider the following 223-residue polypeptide: Imidazoleglycerol-phosphate dehydratase (223 aa).

It belongs to the imidazoleglycerol-phosphate dehydratase family.

It carries out the reaction D-erythro-1-(imidazol-4-yl)glycerol 3-phosphate = 3-(imidazol-4-yl)-2-oxopropyl phosphate + H2O. It participates in amino-acid biosynthesis; L-histidine biosynthesis; L-histidine from 5-phospho-alpha-D-ribose 1-diphosphate: step 6/9. This Torulaspora delbrueckii (Yeast) protein is Imidazoleglycerol-phosphate dehydratase (HIS3).